A 139-amino-acid chain; its full sequence is MAMTVHCDIVSAEGEIFSGLVEMVVAHGNLGDLGIAPGHAPLITNLKPGPITLTKQGGTQEVFYISGGFLEVQPNMVKVLADTVQRAADLDEAQAQEALKAAENALNLKGADFDYGAAAARLAEAAAQLRTVQQMRKGK.

The protein belongs to the ATPase epsilon chain family. In terms of assembly, F-type ATPases have 2 components, CF(1) - the catalytic core - and CF(0) - the membrane proton channel. CF(1) has five subunits: alpha(3), beta(3), gamma(1), delta(1), epsilon(1). CF(0) has three main subunits: a, b and c.

Its subcellular location is the cell inner membrane. Functionally, produces ATP from ADP in the presence of a proton gradient across the membrane. This Pseudomonas putida (strain GB-1) protein is ATP synthase epsilon chain.